A 79-amino-acid polypeptide reads, in one-letter code: U-actitoxin-Avd8a (79 aa).

The first 19 residues, M1–A19, serve as a signal peptide directing secretion. Positions N20–R36 are excised as a propeptide.

The protein belongs to the sea anemone 8 toxin family.

The protein resides in the secreted. The protein localises to the nematocyst. In Anemonia viridis (Snakelocks anemone), this protein is U-actitoxin-Avd8a.